Consider the following 119-residue polypeptide: MARTSFKLEHPLERRQAESARIREKYSDRIPVIVEKADKTDVPEIDKKKYLVPADLTVGQFVYVVRKRIKLSPEKAIFVFVKNTLPPTASLMSAIYEENKDEDGFLYMTYSGENTFGSA.

The Phosphatidylethanolamine amidated glycine moiety is linked to residue Gly117. Positions 118 to 119 (SA) are cleaved as a propeptide — removed in mature form.

It belongs to the ATG8 family. Interacts with ATG4. The C-terminal 2 residues are removed by ATG4 to expose Gly-117 at the C-terminus. The C-terminal Gly is then amidated with phosphatidylethanolamine by an activating system similar to that for ubiquitin. As to expression, constitutively expressed.

The protein localises to the cytoplasmic vesicle. It localises to the autophagosome membrane. It is found in the vacuole membrane. The protein resides in the cytoplasm. Its subcellular location is the cytoskeleton. Functionally, ubiquitin-like modifier involved in cytoplasm to vacuole transport (Cvt) vesicles and autophagosomes formation. May mediate the delivery of the vesicles and autophagosomes to the vacuole via the microtubule cytoskeleton. Its function is as follows. Ubiquitin-like modifier involved in autophagosomes formation. May mediate the delivery of the autophagosomes to the vacuole via the microtubule cytoskeleton. The polypeptide is Autophagy-related protein 8A (ATG8A) (Oryza sativa subsp. indica (Rice)).